The primary structure comprises 106 residues: UPF0091 protein RP266 (106 aa).

It belongs to the UPF0091 family.

In Rickettsia prowazekii (strain Madrid E), this protein is UPF0091 protein RP266.